The following is a 966-amino-acid chain: MAKGFYISKTLGILGILLGVAAVCTIIALSVVYAQEKNRNAENSATAPTLPGSTSATTATTTPAVDESKPWNQYRLPKTLIPDSYRVILRPYLTPNNQGLYIFQGNSTVRFTCNQTTDVIIIHSKKLNYTLKGNHRVVLRTLDGTPAPNIDKTELVERTEYLVVHLQGSLVEGRQYEMDSQFQGELADDLAGFYRSEYMEGDVKKVVATTQMQAADARKSFPCFDEPAMKAMFNITLIYPNNLIALSNMLPKESKPYPEDPSCTMTEFHSTPKMSTYLLAYIVSEFKNISSVSANGVQIGIWARPSAIDEGQGDYALNVTGPILNFFAQHYNTSYPLPKSDQIALPDFNAGAMENWGLVTYRESSLVFDSQSSSISNKERVVTVIAHELAHQWFGNLVTVAWWNDLWLNEGFASYVEYLGADYAEPTWNLKDLMVLNDVYRVMAVDALASSHPLSSPADEIKTPDQIMELFDSITYSKGASVIRMLSSFLTEDLFKKGLSSYLHTYQYSNTVYLDLWEHLQKAVNQQTAVQPPATVRTIMDRWILQMGFPVITVNTNTGEISQKHFLLDSKSNVTRPSEFNYIWIAPIPFLKSGQEDHYWLDVEKNQSAKFQTSSNEWILLNINVTGYYLVNYDENNWKKLQNQLQTDLSVIPVINRAQIIHDSFNLASAKMIPITLALDNTLFLVKEAEYMPWQAALSSLNYFTLMFDRSEVYGPMKRYLKKQVTPLFFYFQNRTNNWVNRPPTLMEQYNEINAISTACSSGLKECRDLVVELYSQWMKNPNNNTIHPNLRSTVYCNAIAFGGEEEWNFAWEQFRNATLVNEADKLRSALACSKDVWILNRYLSYTLNPDYIRKQDTTSTIISIASNVAGHPLVWDFVRSNWKKLFENYGGGSFSFANLIQGVTRRFSSEFELQQLEQFKADNSATGFGTGTRALEQALEKTRANIDWVKENKDAVFKWFTENSS.

Over 1–8 the chain is Cytoplasmic; sequence MAKGFYIS. The helical; Signal-anchor for type II membrane protein transmembrane segment at 9–32 threads the bilayer; it reads KTLGILGILLGVAAVCTIIALSVV. Positions 33–68 are cytosolic Ser/Thr-rich junction; sequence YAQEKNRNAENSATAPTLPGSTSATTATTTPAVDES. At 33 to 966 the chain is on the extracellular side; that stretch reads YAQEKNRNAE…VFKWFTENSS (934 aa). The tract at residues 42-64 is disordered; that stretch reads ENSATAPTLPGSTSATTATTTPA. Low complexity predominate over residues 44–64; the sequence is SATAPTLPGSTSATTATTTPA. Residues 69–966 form a metalloprotease region; sequence KPWNQYRLPK…VFKWFTENSS (898 aa). Asn-106, Asn-114, and Asn-128 each carry an N-linked (GlcNAc...) asparagine glycan. The residue at position 176 (Tyr-176) is a Sulfotyrosine. 4 N-linked (GlcNAc...) asparagine glycosylation sites follow: Asn-234, Asn-288, Asn-318, and Asn-332. 351–355 provides a ligand contact to substrate; the sequence is GAMEN. His-387 serves as a coordination point for Zn(2+). Catalysis depends on Glu-388, which acts as the Proton acceptor. Residues His-391 and Glu-410 each coordinate Zn(2+). Tyr-418 and Tyr-423 each carry sulfotyrosine. N-linked (GlcNAc...) asparagine glycosylation is found at Asn-573, Asn-606, Asn-624, and Asn-734. Cysteines 760 and 767 form a disulfide. 2 N-linked (GlcNAc...) asparagine glycosylation sites follow: Asn-784 and Asn-817. Cys-797 and Cys-833 form a disulfide bridge. Tyr-852 bears the Phosphotyrosine mark.

This sequence belongs to the peptidase M1 family. Homodimer. Interacts with SLC6A19. It depends on Zn(2+) as a cofactor. Post-translationally, N- and O-glycosylated. Sulfated. In terms of processing, may undergo proteolysis and give rise to a soluble form. As to expression, expressed in the intestinal brush border (at protein level). Highly expressed in intestinal tract and kidney, present in liver, lymph node, spleen, and brain. Found as well in monocytes, macrophages, dendritic cells, veiled cells and B-cells but not on T-cells and thymocytes.

It localises to the cell membrane. It carries out the reaction Release of an N-terminal amino acid, Xaa-|-Yaa- from a peptide, amide or arylamide. Xaa is preferably Ala, but may be most amino acids including Pro (slow action). When a terminal hydrophobic residue is followed by a prolyl residue, the two may be released as an intact Xaa-Pro dipeptide.. Its function is as follows. Broad specificity aminopeptidase which plays a role in the final digestion of peptides generated from hydrolysis of proteins by gastric and pancreatic proteases. Also involved in the processing of various peptides including peptide hormones, such as angiotensin III and IV, neuropeptides, and chemokines. May also be involved the cleavage of peptides bound to major histocompatibility complex class II molecules of antigen presenting cells. May have a role in angiogenesis and promote cholesterol crystallization. May have a role in amino acid transport by acting as binding partner of amino acid transporter SLC6A19 and regulating its activity. The polypeptide is Aminopeptidase N (Anpep) (Mus musculus (Mouse)).